Consider the following 74-residue polypeptide: Defensin Lc-def (74 aa).

The signal sequence occupies residues M1–A27. Disulfide bonds link C30–C74, C41–C62, C47–C68, and C51–C70.

The protein localises to the secreted. Its function is as follows. Has antifungal activity against the phytopathogenic fungus A.niger VKM F-2259, but not against A.alternata VKM F-3047. Does not inhibit trypsin or chymotrypsin. The chain is Defensin Lc-def from Lens culinaris subsp. culinaris (Cultivated lentil).